Here is a 514-residue protein sequence, read N- to C-terminus: Thymus-specific serine protease (514 aa).

The signal sequence occupies residues 1–24 (MAVWLAQWLGPLLLVSLWGLLAPA). N-linked (GlcNAc...) asparagine glycosylation is found at Asn-70 and Asn-172. Ser-185 serves as the catalytic Charge relay system. N-linked (GlcNAc...) asparagine glycosylation is present at Asn-321. Active-site charge relay system residues include Asp-447 and His-472.

The protein belongs to the peptidase S28 family. Expressed predominantly in cortical thymic epithelial cells.

The protein localises to the cytoplasmic vesicle. Functionally, protease that may play a role in T-cell development. This chain is Thymus-specific serine protease (PRSS16), found in Homo sapiens (Human).